The sequence spans 464 residues: Zinc transporter 6-A (464 aa).

Over 1–33 the chain is Cytoplasmic; that stretch reads MGTIYLFRKTQRSLLGKLAQEFRLVTADRRSWK. A helical transmembrane segment spans residues 34 to 54; sequence ILLFGAINVVCTAFLLTWCSS. Residues 55 to 64 lie on the Extracellular side of the membrane; the sequence is TNSMALTAYT. A helical membrane pass occupies residues 65 to 85; sequence YLTIFDLFSLITSLISYWVTM. Topologically, residues 86 to 98 are cytoplasmic; sequence KKPSPTYSFGFER. Residues 99–119 traverse the membrane as a helical segment; that stretch reads FEVLAVFASTVLAQLGALFIL. At 120 to 134 the chain is on the extracellular side; the sequence is KESAERFIEQPEIHT. The helical transmembrane segment at 135–155 threads the bilayer; that stretch reads GRLLVGTFVALFFNLFTMLSI. The Cytoplasmic portion of the chain corresponds to 156–200; the sequence is RNKPFAYVSDAASTSWLQEHVADLSRSLCGIIPGLSSIFLPRMNP. The chain crosses the membrane as a helical span at residues 201–221; it reads FVLIDIAGALALCITYMLIEI. At 222–223 the chain is on the extracellular side; that stretch reads NN. Residues 224 to 244 traverse the membrane as a helical segment; that stretch reads YFAVDTASAVAIAVMTFGTMY. Over 245-464 the chain is Cytoplasmic; that stretch reads PMSVYSGKVL…TPGQFTQFRQ (220 aa).

The protein belongs to the cation diffusion facilitator (CDF) transporter (TC 2.A.4) family. SLC30A subfamily. In terms of assembly, heterodimer with SLC30A5; form a functional zinc ion transmembrane transporter.

It localises to the golgi apparatus. The protein localises to the trans-Golgi network membrane. Has probably no intrinsic transporter activity but together with SLC30A5 forms a functional zinc ion:proton antiporter heterodimer, mediating zinc entry into the lumen of organelles along the secretory pathway. As part of that zinc ion:proton antiporter, contributes to zinc ion homeostasis within the early secretory pathway and regulates the activation and folding of enzymes like alkaline phosphatases and enzymes involved in phosphatidylinositol glycan anchor biosynthesis. This Xenopus laevis (African clawed frog) protein is Zinc transporter 6-A (slc30a6-a).